The primary structure comprises 326 residues: Tryptophan--tRNA ligase (326 aa).

ATP-binding positions include 11–13 (QPT) and 19–20 (GN). The 'HIGH' region signature appears at 12-20 (PTGQIHLGN). Aspartate 135 contributes to the L-tryptophan binding site. ATP contacts are provided by residues 147-149 (GED), valine 186, and 195-199 (KMSKS). Residues 195-199 (KMSKS) carry the 'KMSKS' region motif.

This sequence belongs to the class-I aminoacyl-tRNA synthetase family. In terms of assembly, homodimer.

The protein localises to the cytoplasm. It carries out the reaction tRNA(Trp) + L-tryptophan + ATP = L-tryptophyl-tRNA(Trp) + AMP + diphosphate + H(+). Functionally, catalyzes the attachment of tryptophan to tRNA(Trp). The chain is Tryptophan--tRNA ligase from Helicobacter pylori (strain J99 / ATCC 700824) (Campylobacter pylori J99).